The primary structure comprises 119 residues: Large ribosomal subunit protein bL20 (119 aa).

The protein belongs to the bacterial ribosomal protein bL20 family.

Its function is as follows. Binds directly to 23S ribosomal RNA and is necessary for the in vitro assembly process of the 50S ribosomal subunit. It is not involved in the protein synthesizing functions of that subunit. The protein is Large ribosomal subunit protein bL20 of Acinetobacter baumannii (strain SDF).